The sequence spans 174 residues: Neuromedin-U (174 aa).

A signal peptide spans 1–37; sequence MSRAAGHRPGLSAGQLAAATASPLLSLLLLLACCADA. A propeptide spanning residues 38-105 is cleaved from the precursor; that stretch reads CKGVPISPQR…EQSEKDNTKR (68 aa). Methionine sulfoxide; partial is present on Met141. Asn166 is subject to Asparagine amide. The propeptide occupies 170 to 174; the sequence is STSFI.

The protein belongs to the NmU family.

It localises to the secreted. Ligand for receptors NMUR1 and NMUR2. Stimulates muscle contractions of specific regions of the gastrointestinal tract. In terms of biological role, does not function as a ligand for either NMUR1 or NMUR2. Indirectly induces prolactin release although its potency is much lower than that of neuromedin precursor-related peptide 36. Functionally, does not function as a ligand for either NMUR1 or NMUR2. Indirectly induces prolactin release from lactotroph cells in the pituitary gland, probably via the hypothalamic dopaminergic system. Its function is as follows. Stimulates muscle contractions of specific regions of the gastrointestinal tract. This is Neuromedin-U (Nmu) from Mus musculus (Mouse).